Here is an 833-residue protein sequence, read N- to C-terminus: F1 capsule-anchoring protein (833 aa).

Residues 1–25 (MRYSKLFLCAGLTLATLPCWGRAYT) form the signal peptide. Residues cysteine 807 and cysteine 829 are joined by a disulfide bond.

Belongs to the fimbrial export usher family.

Its subcellular location is the cell outer membrane. A probable role in capsular biogenesis. It is likely that the caf1A molecule binds F1 antigen subunits during the extracellular secretion process. This is F1 capsule-anchoring protein (caf1A) from Yersinia pestis.